A 1715-amino-acid chain; its full sequence is Sodium channel protein type 4 subunit alpha B (1715 aa).

The Cytoplasmic portion of the chain corresponds to 1-126; the sequence is MGTLLPPVGS…IFAIKILVHS (126 aa). The I repeat unit spans residues 108 to 431; the sequence is LLSPFNSMRI…VVAMAYAEQN (324 aa). Residues 127–145 form a helical membrane-spanning segment; sequence LFSLFIMATILTNCVFMTL. The Extracellular portion of the chain corresponds to 146-152; that stretch reads SDPPAWS. Residues 153-173 form a helical membrane-spanning segment; sequence KTVEYVFTFIYTFEATIKVVS. At 174–187 the chain is on the cytoplasmic side; sequence RGFCVGQFTFLKDP. A helical membrane pass occupies residues 188 to 205; the sequence is WNWLDFMVISMAYLTELV. The Extracellular portion of the chain corresponds to 206–211; the sequence is DLGNVS. Asn-209 carries an N-linked (GlcNAc...) asparagine glycan. A helical transmembrane segment spans residues 212 to 228; the sequence is VLRTFRVLRALKTITVI. The Cytoplasmic portion of the chain corresponds to 229-247; that stretch reads PGLKTIVGALIQSVKKLAD. Residues 248-267 form a helical membrane-spanning segment; that stretch reads AMVLTVFCLSVFALIGLQLF. Residues 268-368 lie on the Extracellular side of the membrane; it reads MGNLRQKCVL…PNYGYTSYDS (101 aa). A disulfide bridge connects residues Cys-275 and Cys-337. Residues Asn-284, Asn-304, and Asn-339 are each glycosylated (N-linked (GlcNAc...) asparagine). Residues Cys-346 and Cys-352 are joined by a disulfide bond. Residues 369 to 393 constitute an intramembrane region (pore-forming); sequence FGWAFLALFRLMTQDFWENLFQLTL. Topologically, residues 394-400 are extracellular; the sequence is RAAGKTY. Residues 401–421 form a helical membrane-spanning segment; the sequence is MIFFVVVIFLGSFYLINLILA. Over 422–515 the chain is Cytoplasmic; sequence VVAMAYAEQN…RCLSAIVMDP (94 aa). An II repeat occupies 497 to 768; sequence CCSCWRHLKR…QIAVNRIKRA (272 aa). Residues 516-534 form a helical membrane-spanning segment; sequence FVDLGITICIILNTIFMAM. Topologically, residues 535-545 are extracellular; the sequence is EHYPMSADFEE. Residues 546-565 form a helical membrane-spanning segment; sequence LLSVGNLVFTGIFTCEMVLK. The Cytoplasmic portion of the chain corresponds to 566–579; sequence ILAMDPYFYFQVGW. The chain crosses the membrane as a helical span at residues 580 to 599; it reads NIFDSIIVTMSLVELGLANV. The Extracellular segment spans residues 600–601; the sequence is QG. Residues 602 to 619 form a helical membrane-spanning segment; that stretch reads LSVLRSFRLMRVFKLAKS. At 620 to 635 the chain is on the cytoplasmic side; it reads WPTLNMLIKIIGNSVG. The helical transmembrane segment at 636–654 threads the bilayer; sequence ALGNLTLVLAIIVFIFAVV. At 655–683 the chain is on the extracellular side; the sequence is GMQLFGKNYKDCVCRISEDCKLPRWHMND. Cysteines 668 and 674 form a disulfide. Positions 684 to 704 form an intramembrane region, pore-forming; the sequence is FFHAFLIIFRVLCGEWIDTMW. At 705–715 the chain is on the extracellular side; sequence DCMEVSGQTMC. Cys-706 and Cys-715 are joined by a disulfide. The helical transmembrane segment at 716–734 threads the bilayer; sequence LIVYMMVLVIGNLVVLNLF. The Cytoplasmic segment spans residues 735–915; the sequence is LALLLSSFSG…ACFIIVENNY (181 aa). Positions 824 to 865 are disordered; the sequence is EAESDSEDSDDDDVDEDKHSRCDESSFCSTVQDPEVKENEAD. Residues 825–838 are compositionally biased toward acidic residues; the sequence is AESDSEDSDDDDVD. One copy of the III repeat lies at 896–1211; it reads KGKVWCNIRR…KKYYNAMKKL (316 aa). The helical transmembrane segment at 916–933 threads the bilayer; that stretch reads FESFIVFMILLSSGALAF. Residues 934–946 lie on the Extracellular side of the membrane; sequence EDIYLEKHQLIKT. The helical transmembrane segment at 947 to 965 threads the bilayer; sequence ILEYADKVFTYVFVVEMVL. Residues 966 to 979 lie on the Cytoplasmic side of the membrane; sequence KWFAYGFKSYFSNA. Residues 980-998 traverse the membrane as a helical segment; sequence WCWLDFLIVDVSLVSLTAN. Residues 999–1006 are Extracellular-facing; the sequence is ILGYSELG. The chain crosses the membrane as a helical span at residues 1007–1025; sequence AIKSLRTLRALRPLRALSR. Over 1026–1042 the chain is Cytoplasmic; that stretch reads FEGMRVVVNALVGAVPS. Residues 1043 to 1062 form a helical membrane-spanning segment; sequence IFNVLLVCLIFWLIFSIMGV. Residues 1063–1115 are Extracellular-facing; sequence NLFAGKFSYCFNETSQEQFDKKIVNNKTECIALIEANFTEVRWKNLKVNYDNV. An intrachain disulfide couples Cys-1072 to Cys-1092. 2 N-linked (GlcNAc...) asparagine glycosylation sites follow: Asn-1074 and Asn-1088. The segment at residues 1116–1137 is an intramembrane region (pore-forming); it reads GIGYLSLLQVATFKGWMEIMYA. Residues 1138-1154 are Extracellular-facing; the sequence is AVDSRDVESQPIYEVNI. A helical membrane pass occupies residues 1155–1176; it reads YMYLYFVIFIIFGSFFTLNLFI. The Cytoplasmic segment spans residues 1177–1239; it reads GVIIDNFNQQ…LVFDLVTKQI (63 aa). Positions 1195–1197 are important for rapid channel inactivation; it reads IFM. One copy of the IV repeat lies at 1220–1517; sequence VPRPENALQG…WEKFDPDATQ (298 aa). A helical membrane pass occupies residues 1240 to 1257; the sequence is FDVFIMVLICLNMVTMMV. Topologically, residues 1258–1268 are extracellular; sequence ETDEQTKEKED. A helical transmembrane segment spans residues 1269-1287; it reads ILYWINVIFIVIFTTECIL. At 1288 to 1299 the chain is on the cytoplasmic side; the sequence is KTIALRRHYFSI. Residues 1300-1317 form a helical membrane-spanning segment; it reads GWNVFDFVVVILSILGLL. Over 1318–1330 the chain is Extracellular; it reads LADIIEKYFVSPT. A helical transmembrane segment spans residues 1331–1347; sequence LFRVIRLARIGRVLRLI. Over 1348–1366 the chain is Cytoplasmic; it reads RGAKGIRTLLFALMMSLPA. A helical transmembrane segment spans residues 1367–1384; sequence LFNIGLLLFLIMFIFSIF. The Extracellular segment spans residues 1385–1406; it reads GMSNFAYVKKEAMIDDMFNFET. The segment at residues 1407-1429 is an intramembrane region (pore-forming); sequence FGNSMICLFMITTSAGWDGLLSP. The Extracellular segment spans residues 1430 to 1458; the sequence is IMNKPPDCDPDLENPGTTVRGNCGSPAIG. An intrachain disulfide couples Cys-1437 to Cys-1452. The chain crosses the membrane as a helical span at residues 1459 to 1481; the sequence is IVFFSTYIIMSFLVVVNMYIAII. The Cytoplasmic portion of the chain corresponds to 1482-1715; the sequence is LENFNVATEE…LGTSERESLV (234 aa). An IQ domain is found at 1611-1640; that stretch reads EEVAARVIQRAYRKYLLQRTVRLASFTYRE.

Belongs to the sodium channel (TC 1.A.1.10) family. Nav1.4/SCN4A subfamily. Voltage-gated sodium (Nav) channels consist of an ion-conducting alpha subunit which is functional on its own associated with regulatory beta subunits.

The protein resides in the cell membrane. The enzyme catalyses Na(+)(in) = Na(+)(out). In terms of biological role, pore-forming subunit of a voltage-gated sodium (Nav) channel that directly mediates the depolarizing phase of action potentials in excitable membranes. Navs, also called VGSCs (voltage-gated sodium channels) or VDSCs (voltage-dependent sodium channels), operate by switching between closed and open conformations depending on the voltage difference across the membrane. In the open conformation they allow Na(+) ions to selectively pass through the pore, along their electrochemical gradient. The influx of Na+ ions provokes membrane depolarization, initiating the propagation of electrical signals throughout cells and tissues. The polypeptide is Sodium channel protein type 4 subunit alpha B (scn4ab) (Tetraodon nigroviridis (Spotted green pufferfish)).